The chain runs to 391 residues: MGDTFIRHIALLGFEKRFVPSQHYVRYMFLVKWQDLSEKVVYRRFTEIYEFHKTLKEMFPIEAGAINPENRIIPHLPAPKWFDGQRAAENHQGTLTEYCGTLMSLPTKISRCPHLLDFFKVRPDDLKLPTDNQTKKPETYLMPKDGKSTATDITGPIILQTYRAIANYEKTSGSEMALSTGDVVEVVEKSESGWWFCQMKAKRGWIPASFLEPLDSPDETEDPEPNYAGEPYVAIKAYTAVEGDEVSLLEGEAVEVIHKLLDGWWVIRKDDVTGYFPSMYLQKSGQDVSQAQRQIKRGAPPRRSSIRNVHSIHQRSRKRLSQDAYRRNSVRFLQQRRRQARPGPQSPGSPLEEERQTQRSKPQPAVPPRPSADLILNRCSESTKRKLASAV.

In terms of domain architecture, PX spans 1 to 126; it reads MGDTFIRHIA…DFFKVRPDDL (126 aa). SH3 domains lie at 157–216 and 227–286; these read IILQ…PLDS and YAGE…KSGQ. A disordered region spans residues 286–391; the sequence is QDVSQAQRQI…STKRKLASAV (106 aa). A phosphoserine mark is found at Ser304 and Ser305. The span at 310-319 shows a compositional bias: basic residues; that stretch reads HSIHQRSRKR. Phosphoserine occurs at positions 321, 329, 346, and 349.

Its subcellular location is the cytoplasm. Its function is as follows. May be required for activation of the latent NADPH oxidase (necessary for superoxide production). This Homo sapiens (Human) protein is Putative neutrophil cytosol factor 1B (NCF1B).